Here is a 1033-residue protein sequence, read N- to C-terminus: Isoleucine--tRNA ligase (1033 aa).

The 'HIGH' region motif lies at 47–57 (PTANGLPHVGH). Residues 590-594 (KMSKS) carry the 'KMSKS' region motif. Lysine 593 contacts ATP.

Belongs to the class-I aminoacyl-tRNA synthetase family. IleS type 2 subfamily. Monomer. The cofactor is Zn(2+).

The protein resides in the cytoplasm. The catalysed reaction is tRNA(Ile) + L-isoleucine + ATP = L-isoleucyl-tRNA(Ile) + AMP + diphosphate. Its function is as follows. Catalyzes the attachment of isoleucine to tRNA(Ile). As IleRS can inadvertently accommodate and process structurally similar amino acids such as valine, to avoid such errors it has two additional distinct tRNA(Ile)-dependent editing activities. One activity is designated as 'pretransfer' editing and involves the hydrolysis of activated Val-AMP. The other activity is designated 'posttransfer' editing and involves deacylation of mischarged Val-tRNA(Ile). This is Isoleucine--tRNA ligase from Bacillus thuringiensis (strain Al Hakam).